A 74-amino-acid polypeptide reads, in one-letter code: Cold shock-like protein CspD (74 aa).

The 61-residue stretch at Gly4 to Ile64 folds into the CSD domain.

As to quaternary structure, homodimer.

The protein localises to the cytoplasm. Its function is as follows. Inhibits DNA replication at both initiation and elongation steps, most probably by binding to the opened, single-stranded regions at replication forks. Plays a regulatory role in chromosomal replication in nutrient-depleted cells. The protein is Cold shock-like protein CspD (cspD) of Escherichia coli O157:H7.